A 218-amino-acid polypeptide reads, in one-letter code: Probable 2-aminoethanethiol dioxygenase (218 aa).

The cofactor is Fe cation.

It carries out the reaction cysteamine + O2 = hypotaurine + H(+). The sequence is that of Probable 2-aminoethanethiol dioxygenase (ado-1) from Dictyostelium discoideum (Social amoeba).